The primary structure comprises 140 residues: Active regulator of SIRT1 (140 aa).

Disordered regions lie at residues 1 to 52 and 95 to 123; these read MSAS…KNKA and QQVL…EGTV. Residues 108–120 show a composition bias toward basic and acidic residues; sequence DRPAEKKEKKKPE.

Belongs to the AROS family. Part of the small subunit (SSU) processome, composed of more than 70 proteins and the RNA chaperone small nucleolar RNA (snoRNA) U3.

It is found in the nucleus. It localises to the nucleolus. Its function is as follows. Part of the small subunit (SSU) processome, first precursor of the small eukaryotic ribosomal subunit. During the assembly of the SSU processome in the nucleolus, many ribosome biogenesis factors, an RNA chaperone and ribosomal proteins associate with the nascent pre-rRNA and work in concert to generate RNA folding, modifications, rearrangements and cleavage as well as targeted degradation of pre-ribosomal RNA by the RNA exosome. Acts as a chaperone that specifically mediates the integration of RPS19 in state post-A1. Direct regulator of SIRT1. This chain is Active regulator of SIRT1 (RPS19BP1), found in Gallus gallus (Chicken).